Consider the following 162-residue polypeptide: MARVEL domain-containing protein 1 (162 aa).

The Cytoplasmic segment spans residues 1-17 (MPTQPQEKRSFLQFLKS). An MARVEL domain is found at 14 to 155 (FLKSFVGIVR…SGIYCSCRKC (142 aa)). The chain crosses the membrane as a helical span at residues 18–38 (FVGIVRVLQILLGAGLWVTIA). Residues 39 to 47 (ANKYEGSIH) lie on the Extracellular side of the membrane. Residues 48–68 (FVLFVAVLFWLLTLAIFILTL) traverse the membrane as a helical segment. The Cytoplasmic segment spans residues 69–86 (LDKQDLVPIVGGERWLLS). A helical transmembrane segment spans residues 87–107 (NLIHDVVATLLYLSTIGIMIY). Residues 108 to 127 (KTQKNSYCNLDVYKHHCLYK) lie on the Extracellular side of the membrane. The chain crosses the membrane as a helical span at residues 128–148 (VYLTASVFACLTAAVYLLSGI). The Cytoplasmic portion of the chain corresponds to 149 to 162 (YCSCRKCRGERTVV).

It localises to the membrane. The protein resides in the nucleus. In Danio rerio (Zebrafish), this protein is MARVEL domain-containing protein 1 (marveld1).